The sequence spans 390 residues: Succinate--CoA ligase [ADP-forming] subunit beta (390 aa).

One can recognise an ATP-grasp domain in the interval 9–245; that stretch reads KELLSRYGLP…KSQENEREVK (237 aa). ATP contacts are provided by residues lysine 46, 53 to 55, glutamate 100, tyrosine 103, and glutamate 108; that span reads GRG. Asparagine 200 and aspartate 214 together coordinate Mg(2+). Substrate is bound by residues asparagine 265 and 322–324; that span reads GIV.

It belongs to the succinate/malate CoA ligase beta subunit family. As to quaternary structure, heterotetramer of two alpha and two beta subunits. Mg(2+) is required as a cofactor.

The enzyme catalyses succinate + ATP + CoA = succinyl-CoA + ADP + phosphate. The catalysed reaction is GTP + succinate + CoA = succinyl-CoA + GDP + phosphate. The protein operates within carbohydrate metabolism; tricarboxylic acid cycle; succinate from succinyl-CoA (ligase route): step 1/1. Functionally, succinyl-CoA synthetase functions in the citric acid cycle (TCA), coupling the hydrolysis of succinyl-CoA to the synthesis of either ATP or GTP and thus represents the only step of substrate-level phosphorylation in the TCA. The beta subunit provides nucleotide specificity of the enzyme and binds the substrate succinate, while the binding sites for coenzyme A and phosphate are found in the alpha subunit. This chain is Succinate--CoA ligase [ADP-forming] subunit beta, found in Chromobacterium violaceum (strain ATCC 12472 / DSM 30191 / JCM 1249 / CCUG 213 / NBRC 12614 / NCIMB 9131 / NCTC 9757 / MK).